A 409-amino-acid polypeptide reads, in one-letter code: MKLFLRNAFKTLNPKRKLATTILPSINLILVKPFSQSTTIPKKQDRVRDHGYDNYMEVEKKIRKVVKFHSLILSQPNHTIAISLLDTLARRLGLGFKQHEPGAFLLKFPHVFEIYEHPVQRILYCRLTRKALDQIRHEHEAVLDQIPDAVTRLRKLVMMSNTGRIRLEHVRIARTEFGLPEDFEYSVILKHPQFFRLIDGEETRDKYIEIVEKDPNLSICAIERVREIEYRTKGIDAEDVRFSFVVNFPPGFKIGKYFRIAVWKWQRLPYWSPYEDISGYDLRSMEAQNRLEKRSVACIHELLSLTVEKKITLERIAHFRNVMNLPKKLKEFLLQHQGIFYISTRGNYGKLHTVFLREGYKRGELVEPNDVYLARRRLAELVLMSPRKAKVDAELVRYRDGLDDEDDVE.

The PORR domain occupies 47-386 (VRDHGYDNYM…RLAELVLMSP (340 aa)).

Expressed in roots, hypocotyls, cotyledons and shoot apex.

Its function is as follows. Involved in pre-arranging the maintenance of the active cell proliferation during root primordium development. Does not seem to be involved in cell cycle progression. The chain is Protein ROOT PRIMORDIUM DEFECTIVE 1 (RPD1) from Arabidopsis thaliana (Mouse-ear cress).